Consider the following 162-residue polypeptide: uncharacterized protein (162 aa).

The segment at 29–50 (CPFCDYTNADAKVVRKHVKSKH) adopts a C2H2-type zinc-finger fold. The segment at 60–93 (KLESQKSKNNGKKQTGQKKQGKGKKQPKRVRETC) is disordered. Residues 68–87 (NNGKKQTGQKKQGKGKKQPK) show a composition bias toward basic residues.

The protein to M.jannaschii MJECS06.

This is an uncharacterized protein from Methanocaldococcus jannaschii (strain ATCC 43067 / DSM 2661 / JAL-1 / JCM 10045 / NBRC 100440) (Methanococcus jannaschii).